We begin with the raw amino-acid sequence, 416 residues long: Phosphoglycerate kinase (416 aa).

Positions 23, 24, 25, 26, 38, 39, 62, 63, 65, 66, 121, 122, 168, and 169 each coordinate (2R)-3-phosphoglycerate. An ADP-binding site is contributed by glycine 212. Glycine 212 provides a ligand contact to CDP. Residues alanine 213 and lysine 214 each coordinate AMP. Alanine 213 contributes to the ATP binding site. Alanine 213 lines the Mg(2+) pocket. Residues alanine 216 and aspartate 217 each contribute to the Mg(2+) site. Aspartate 217 lines the CDP pocket. Lysine 218 is a binding site for AMP. Lysine 218 provides a ligand contact to ATP. An ADP-binding site is contributed by glycine 236. Glycine 236 is a binding site for CDP. The AMP site is built by glycine 237 and glycine 311. The ATP site is built by glycine 237 and glycine 311. Residues glycine 336 and phenylalanine 341 each contribute to the CDP site. Phenylalanine 341 is a binding site for ADP. Glutamate 342 lines the AMP pocket. The ATP site is built by glutamate 342, aspartate 373, and threonine 374. Mg(2+) is bound at residue aspartate 373.

Belongs to the phosphoglycerate kinase family. In terms of assembly, monomer. The cofactor is Mg(2+).

The protein localises to the cytoplasm. The protein resides in the mitochondrion. It catalyses the reaction (2R)-3-phosphoglycerate + ATP = (2R)-3-phospho-glyceroyl phosphate + ADP. It participates in carbohydrate degradation; glycolysis; pyruvate from D-glyceraldehyde 3-phosphate: step 2/5. In terms of biological role, catalyzes one of the two ATP producing reactions in the glycolytic pathway via the reversible conversion of 1,3-diphosphoglycerate to 3-phosphoglycerate. Both L- and D- forms of purine and pyrimidine nucleotides can be used as substrates, but the activity is much lower on pyrimidines. Negatively regulates the biosynthesis of acetyl-CoA from pyruvate in the mitochondrion. The sequence is that of Phosphoglycerate kinase (PGK1) from Eremothecium gossypii (strain ATCC 10895 / CBS 109.51 / FGSC 9923 / NRRL Y-1056) (Yeast).